The sequence spans 344 residues: Galactinol synthase 1 (344 aa).

Residue lysine 111 is part of the active site. 3 residues coordinate Mn(2+): aspartate 127, aspartate 129, and histidine 265.

Belongs to the glycosyltransferase 8 family. Galactosyltransferase subfamily. It depends on a divalent metal cation as a cofactor. As to expression, accumulates in mature seeds. Expressed in seedlings (axes and cotyledons), meristems, vascular tissues and emerging lateral roots. Present in abscission zones.

The protein resides in the cytoplasm. The enzyme catalyses myo-inositol + UDP-alpha-D-galactose = alpha-D-galactosyl-(1-&gt;3)-1D-myo-inositol + UDP + H(+). Its function is as follows. Galactinol synthase involved in the biosynthesis of raffinose family oligosaccharides (RFOs) that function as osmoprotectants. Promotes plant stress tolerance such as heat, chilling, salinity and methylviologen (MV), a superoxide radical generating drug, by mediating raffinose accumulation, an osmoprotective substance. The chain is Galactinol synthase 1 (GOLS1) from Arabidopsis thaliana (Mouse-ear cress).